A 218-amino-acid chain; its full sequence is RNA polymerase sigma-H factor (218 aa).

The Polymerase core binding signature appears at 62–75; sequence DIVQEGMIGLYKSI. Residues 182 to 201 constitute a DNA-binding region (H-T-H motif); that stretch reads YQEISDELNRHVKSIDNALQ.

This sequence belongs to the sigma-70 factor family. Interacts transiently with the RNAP core.

Functionally, sigma factors are initiation factors that promote the attachment of RNA polymerase (RNAP) to specific initiation sites and are then released. This sigma factor is involved in the transition to post-exponential phase in the beginning of sporulation. It is also required for transcription of several stationary phase genes. Association with the RNAP core increases rapidly in early exponential phase, and reamins constant expression level after. This Bacillus subtilis (strain 168) protein is RNA polymerase sigma-H factor (sigH).